The chain runs to 636 residues: Plasma kallikrein (636 aa).

An N-terminal signal peptide occupies residues 1–19; sequence MIALRQAAYFICLFATVSC. 4 consecutive Apple domains span residues 21–104, 111–194, 201–284, and 294–377; these read CLTQ…LKRC, CHRS…LKAC, CRVD…LLTC, and CHSK…LRLC. Cystine bridges form between Cys21–Cys104, Cys47–Cys77, Cys51–Cys57, Cys111–Cys194, Cys137–Cys166, Cys141–Cys147, Cys201–Cys284, Cys227–Cys256, Cys231–Cys237, Cys294–Cys377, Cys320–Cys349, and Cys324–Cys330. Residues Asn66 and Asn127 are each glycosylated (N-linked (GlcNAc...) asparagine). N-linked (GlcNAc...) asparagine glycosylation is found at Asn361 and Asn397. In terms of domain architecture, Peptidase S1 spans 392-627; it reads IVGGTNASWG…YVDWILEKTQ (236 aa). Cys420 and Cys436 are disulfide-bonded. His435 acts as the Charge relay system in catalysis. Asn454 carries N-linked (GlcNAc...) asparagine glycosylation. Catalysis depends on Asp484, which acts as the Charge relay system. An N-linked (GlcNAc...) asparagine glycan is attached at Asn495. 3 disulfides stabilise this stretch: Cys518–Cys585, Cys549–Cys564, and Cys575–Cys603. Ser579 serves as the catalytic Charge relay system.

The protein belongs to the peptidase S1 family. Plasma kallikrein subfamily. Forms a heterodimer with SERPINA5. The zymogen is activated by factor XIIa, which cleaves the molecule into a light chain, which contains the active site, and a heavy chain, which associates with HMW kininogen. These chains are linked by one or more disulfide bonds.

It is found in the secreted. It carries out the reaction Cleaves selectively Arg-|-Xaa and Lys-|-Xaa bonds, including Lys-|-Arg and Arg-|-Ser bonds in (human) kininogen to release bradykinin.. With respect to regulation, inhibited by SERPINA5. In terms of biological role, the enzyme cleaves Lys-Arg and Arg-Ser bonds. It activates, in a reciprocal reaction, factor XII after its binding to a negatively charged surface. It also releases bradykinin from HMW kininogen and may also play a role in the renin-angiotensin system by converting prorenin into renin. The protein is Plasma kallikrein (KLKB1) of Bos taurus (Bovine).